We begin with the raw amino-acid sequence, 35 residues long: ADDDCLPRGSKCLGENKQCCKGTTCMFYANRCVGV.

Intrachain disulfides connect Cys5–Cys20, Cys12–Cys25, and Cys19–Cys32.

The protein localises to the secreted. In terms of biological role, binds reversibly and blocks P/Q-type voltage-gated calcium channels (Cav). The chain is Toxin Ado1 from Agriosphodrus dohrni (Japanese assassin-bug).